Here is a 175-residue protein sequence, read N- to C-terminus: Large ribosomal subunit protein mL67 (175 aa).

Belongs to the mitochondrion-specific ribosomal protein mL67 family. In terms of assembly, component of the mitochondrial large ribosomal subunit (mt-LSU). Mature yeast 74S mitochondrial ribosomes consist of a small (37S) and a large (54S) subunit. The 37S small subunit contains a 15S ribosomal RNA (15S mt-rRNA) and at least 32 different proteins. The 54S large subunit contains a 21S rRNA (21S mt-rRNA) and at least 45 different proteins.

Its subcellular location is the mitochondrion. Functionally, component of the mitochondrial ribosome (mitoribosome), a dedicated translation machinery responsible for the synthesis of mitochondrial genome-encoded proteins, including at least some of the essential transmembrane subunits of the mitochondrial respiratory chain. The mitoribosomes are attached to the mitochondrial inner membrane and translation products are cotranslationally integrated into the membrane. mL67/mhr1 also has extraribosomal functions, being involved in regulation of mitochondrial DNA recombination, maintenance and repair, and generation of homoplasmic cells. mL67/mhr1 also acts as transcription factor involved in regulation of RNA polymerase II-dependent transcription. The chain is Large ribosomal subunit protein mL67 (mhr1) from Schizosaccharomyces pombe (strain 972 / ATCC 24843) (Fission yeast).